A 272-amino-acid chain; its full sequence is Adenylate kinase (272 aa).

Residue 55–60 (GAGKGT) coordinates ATP. An NMP region spans residues 75-104 (ATGDMLRSQVAKKTPLGKEAKKIMDQGGLV). Residues Thr76, Arg81, 102–104 (GLV), 131–134 (GFPR), and Gln138 each bind AMP. Residues 172-209 (GRLVHPASGRSYHKIFNPPKQDMKDDITGEPLIQRSDD) are LID. ATP-binding positions include Arg173 and 182–183 (SY). AMP is bound by residues Arg206 and Arg217. Gln245 is a binding site for ATP.

This sequence belongs to the adenylate kinase family. AK2 subfamily. As to quaternary structure, monomer.

It is found in the cytoplasm. The protein resides in the cytosol. Its subcellular location is the mitochondrion intermembrane space. It carries out the reaction AMP + ATP = 2 ADP. Functionally, catalyzes the reversible transfer of the terminal phosphate group between ATP and AMP. Plays an important role in cellular energy homeostasis and in adenine nucleotide metabolism. Adenylate kinase activity is critical for regulation of the phosphate utilization and the AMP de novo biosynthesis pathways. In Talaromyces marneffei (Penicillium marneffei), this protein is Adenylate kinase (adk1).